The chain runs to 1180 residues: Nonsense-mediated mRNA decay factor SMG7 (1180 aa).

2 TPR repeats span residues 151-184 (QHCL…VPSN) and 186-218 (QPYN…KFPF). Disordered regions lie at residues 496–636 (PQEK…TQTT), 692–795 (QTAS…SYMQ), 893–913 (CSDQ…SSPL), 1019–1127 (SLFE…WAAQ), and 1148–1180 (SSMM…NPPH). Residues 504 to 520 (LQESSNGEQTPNESTHG) show a composition bias toward polar residues. Basic and acidic residues-rich tracts occupy residues 547–559 (ENIK…REQN), 584–606 (NEQK…KTTD), and 615–627 (TELR…EARK). Polar residues predominate over residues 692–718 (QTASHPQSANPVQTGKPSHIPYSQQRP). Residues 728–740 (PPQPQQTQPPPPQ) show a composition bias toward pro residues. The span at 741–778 (TSQQALQQSVQLQLQQQQQQQQQQQQQQQQSPTKQSSQ) shows a compositional bias: low complexity. Polar residues predominate over residues 1026–1038 (WSPSLPASSDHST). Over residues 1039-1065 (PASQSPHSSNPSSLPSSPPTHSHGSMP) the composition is skewed to low complexity. Residues 1076–1090 (DSRDRRANDRWKAEK) are compositionally biased toward basic and acidic residues. A compositionally biased stretch (polar residues) spans 1103–1125 (SASTSSVPETNSWHQGAPTSTWA).

It localises to the cytoplasm. It is found in the nucleus. In terms of biological role, plays a role in nonsense-mediated mRNA decay. Recruits UPF1 to cytoplasmic mRNA decay bodies. Together with SMG5 is thought to provide a link to the mRNA degradation machinery involving exonucleolytic pathways, and to serve as an adapter for UPF1 to protein phosphatase 2A (PP2A), thereby triggering UPF1 dephosphorylation. Required for normal embryonic development. The sequence is that of Nonsense-mediated mRNA decay factor SMG7 from Danio rerio (Zebrafish).